The sequence spans 256 residues: Ribosomal RNA small subunit methyltransferase A (256 aa).

S-adenosyl-L-methionine-binding residues include H12, L14, G39, E60, D83, and N101.

It belongs to the class I-like SAM-binding methyltransferase superfamily. rRNA adenine N(6)-methyltransferase family. RsmA subfamily.

The protein resides in the cytoplasm. It carries out the reaction adenosine(1518)/adenosine(1519) in 16S rRNA + 4 S-adenosyl-L-methionine = N(6)-dimethyladenosine(1518)/N(6)-dimethyladenosine(1519) in 16S rRNA + 4 S-adenosyl-L-homocysteine + 4 H(+). Its function is as follows. Specifically dimethylates two adjacent adenosines (A1518 and A1519) in the loop of a conserved hairpin near the 3'-end of 16S rRNA in the 30S particle. May play a critical role in biogenesis of 30S subunits. The protein is Ribosomal RNA small subunit methyltransferase A of Nitrosomonas eutropha (strain DSM 101675 / C91 / Nm57).